Here is a 78-residue protein sequence, read N- to C-terminus: Large ribosomal subunit protein bL28 (78 aa).

The protein belongs to the bacterial ribosomal protein bL28 family.

The sequence is that of Large ribosomal subunit protein bL28 from Microcystis aeruginosa (strain NIES-843 / IAM M-2473).